Reading from the N-terminus, the 269-residue chain is Triosephosphate isomerase (269 aa).

8–10 (NWK) contributes to the substrate binding site. His105 serves as the catalytic Electrophile. The active-site Proton acceptor is the Glu183. Substrate contacts are provided by residues Gly189, Ser227, and 248–249 (GG).

Belongs to the triosephosphate isomerase family. As to quaternary structure, homodimer.

Its subcellular location is the cytoplasm. The enzyme catalyses D-glyceraldehyde 3-phosphate = dihydroxyacetone phosphate. It participates in carbohydrate biosynthesis; gluconeogenesis. The protein operates within carbohydrate degradation; glycolysis; D-glyceraldehyde 3-phosphate from glycerone phosphate: step 1/1. Involved in the gluconeogenesis. Catalyzes stereospecifically the conversion of dihydroxyacetone phosphate (DHAP) to D-glyceraldehyde-3-phosphate (G3P). The chain is Triosephosphate isomerase from Psychrobacter arcticus (strain DSM 17307 / VKM B-2377 / 273-4).